The following is a 385-amino-acid chain: cAMP-dependent protein kinase regulatory subunit (385 aa).

The segment covering 1-22 (MSSTGFTSPFGNANPFGSSGRS) has biased composition (polar residues). Disordered regions lie at residues 1-51 (MSST…GVKN) and 77-111 (DFPA…PVHP). A dimerization and phosphorylation region spans residues 1-128 (MSSTGFTSPF…RLKKAISGNF (128 aa)). Ser89 bears the Phosphoserine mark. 3',5'-cyclic AMP contacts are provided by residues 129 to 260 (LFNH…EEVP), Glu207, Arg216, 261 to 378 (ILKT…EAEE), Glu328, and Arg337.

This sequence belongs to the cAMP-dependent kinase regulatory chain family. As to quaternary structure, tetramer, composed of 2 regulatory (R) and 2 catalytic (C) subunits. In the presence of cAMP it dissociates into 2 active monomeric C subunits and an R dimer.

The protein is cAMP-dependent protein kinase regulatory subunit (mcb) of Neurospora crassa (strain ATCC 24698 / 74-OR23-1A / CBS 708.71 / DSM 1257 / FGSC 987).